Here is an 823-residue protein sequence, read N- to C-terminus: MTKFSGNELRAELYRRAFLSYSVAPGALGMFGRSLLAKGARAEALANGTVMSGSHWGVFTATVENGRATAFTPWEKDPHPTPMLEGVLDSIYSPTRIKYPMVRREFLEKGVNADRSTRGNGDFVRVSWDQALDLVAAEVKRVEETYGPQGVFGGSYGWKSPGRLHNCTTLLRRMLTLAGGYVNGAGDYSTGAAQVIMPHVVGTLEVYEQQTAWPVLAENTEVMVFWAADPIKTSQIGWVIPEHGAYPGLEALKAKGTKVIVIDPVRTKTVEFFGADHVTPKPQTDVAIMLGMAHTLVAEDLYDKDFIANYTSGFDKFLPYLMGETDSTPKTAEWASDISGVPAETIKELARLFISKRTMLAAGWSMQRMHHGEQAHWMLVTLASMLGQIGLPGGGFGLSYHYSGGGTPSTSGPALSGITDGGAATKGPEWLAASGASVIPVARVVDMLENPGAEFDFNGTRSKFPDVKMAYWVGGNPFVHHQDRNRMVKAWEKLETFIVHDFQWTPTARHADIVLPATTSYERNDIETIGDYSNTGILAMKKIVEPLYEARSDYDIFAAVAERLGKGKEFTEGKDEMGWIKSFYDDAAKQGKAGGVEMPAFDAFWAEGIVEFPVTDGADFVRYASFREDPLLNPLGTPTGLIEIYSKNIEKMGYDDCPAHPTWMEPLERLDGPGAKYPLHIAASHPFNRLHSQLNGTVLREGYAVQGHEPCLMHPDDAAARGIADGDVVRVHNDRGQILTGVKVTDAVMKGVIQIYEGGWYDPSDVTEPGTLDKYGDVNVLSADIGTSKLAQGNCGQTVLAEVEKYTGPAVTLTGFVAPKAAE.

The tat-type signal signal peptide spans 1-42 (MTKFSGNELRAELYRRAFLSYSVAPGALGMFGRSLLAKGARA). Residues 156 to 160 (YGWKS), W158, S189, 232 to 233 (KT), 262 to 263 (ID), 283 to 285 (QTD), 364 to 365 (WS), R368, N476, H480, 500 to 501 (HD), R523, D553, 685 to 686 (HP), 691 to 693 (HSQ), N779, and 796 to 797 (GQ) each bind Mo-bis(molybdopterin guanine dinucleotide).

Homodimer. It depends on Mo-bis(molybdopterin guanine dinucleotide) as a cofactor. Predicted to be exported by the Tat system. The position of the signal peptide cleavage has been experimentally proven.

It is found in the periplasm. It carries out the reaction dimethyl sulfide + a menaquinone + H2O = dimethyl sulfoxide + a menaquinol. It catalyses the reaction trimethylamine + 2 Fe(III)-[cytochrome c] + H2O = trimethylamine N-oxide + 2 Fe(II)-[cytochrome c] + 3 H(+). Its function is as follows. Catalyzes the reduction of dimethyl sulfoxide (DMSO) and trimethylamine N-oxide (TMAO) to dimethyl sulfide (DMS) and trimethylamine, respectively. The terminal DMSO reductase can also use various sulfoxides and N-oxide compounds as terminal electron acceptor in addition to DMSO and TMAO. The protein is Dimethyl sulfoxide/trimethylamine N-oxide reductase (dorA) of Rhodobacter capsulatus (Rhodopseudomonas capsulata).